The sequence spans 874 residues: Protein Son (874 aa).

Disordered regions lie at residues 1–45, 68–98, and 120–368; these read MTEN…ERPD, RRSN…NIKP, and ELLD…SRDL. Residues 12 to 24 show a composition bias toward polar residues; the sequence is ETPQVAGSQTNPP. Low complexity predominate over residues 70 to 89; the sequence is SNSNELGNNDESGESESSAS. 2 stretches are compositionally biased toward basic residues: residues 128–147 and 162–175; these read KKKK…KKKT and KHKH…HKDI. 2 stretches are compositionally biased toward basic and acidic residues: residues 176 to 219 and 226 to 277; these read RVKD…KDKF and SEKE…ERVR. In terms of domain architecture, G-patch spans 705 to 751; sequence TGGMGMALLQKMGWKPGEGLGRCKTGSLQPLLLDVKLDKRGLVSRDD. The DRBM domain maps to 800-870; the sequence is HPVCVLNELT…AALCLRSLGI (71 aa).

As to expression, expressed in ovarian nurse cells (at protein level).

The protein resides in the nucleus. Functionally, RNA-binding protein that protects nascent transcripts containing intronic transposable sequences, known as INE-1, from being degraded by DIP1. Modulates DIP1 activity by repressing its sumoylation levels. This ensures that intronic sequences will be degradated only after splicing. In the ovaries, regulates germline stem cells (GSCs) self-renewal by repressing the expression of the GSC differentiation-promoting factor Rga. The protein is Protein Son of Drosophila melanogaster (Fruit fly).